The following is a 93-amino-acid chain: Small ribosomal subunit protein uS19 (93 aa).

It belongs to the universal ribosomal protein uS19 family.

In terms of biological role, protein S19 forms a complex with S13 that binds strongly to the 16S ribosomal RNA. The sequence is that of Small ribosomal subunit protein uS19 from Karelsulcia muelleri (strain GWSS) (Sulcia muelleri).